The chain runs to 89 residues: Large ribosomal subunit protein bL27 (89 aa).

This sequence belongs to the bacterial ribosomal protein bL27 family.

This chain is Large ribosomal subunit protein bL27, found in Cytophaga hutchinsonii (strain ATCC 33406 / DSM 1761 / CIP 103989 / NBRC 15051 / NCIMB 9469 / D465).